Here is a 357-residue protein sequence, read N- to C-terminus: DNA integrity scanning protein DisA (357 aa).

One can recognise a DAC domain in the interval 9 to 147 (DRKLLEILKT…DDIKYILRDS (139 aa)). ATP-binding positions include glycine 76, leucine 94, and 107–111 (TRHRT).

The protein belongs to the DisA family. In terms of assembly, homooctamer. Mg(2+) serves as cofactor.

The catalysed reaction is 2 ATP = 3',3'-c-di-AMP + 2 diphosphate. Participates in a DNA-damage check-point that is active prior to asymmetric division when DNA is damaged. DisA forms globular foci that rapidly scan along the chromosomes during sporulation, searching for lesions. When a lesion is present, DisA pauses at the lesion site. This triggers a cellular response that culminates in a temporary block in sporulation initiation. Functionally, also has diadenylate cyclase activity, catalyzing the condensation of 2 ATP molecules into cyclic di-AMP (c-di-AMP). c-di-AMP acts as a signaling molecule that couples DNA integrity with progression of sporulation. The rise in c-di-AMP level generated by DisA while scanning the chromosome, operates as a positive signal that advances sporulation; upon encountering a lesion, the DisA focus arrests at the damaged site and halts c-di-AMP synthesis. The sequence is that of DNA integrity scanning protein DisA from Clostridium acetobutylicum (strain ATCC 824 / DSM 792 / JCM 1419 / IAM 19013 / LMG 5710 / NBRC 13948 / NRRL B-527 / VKM B-1787 / 2291 / W).